The following is a 131-amino-acid chain: Small ribosomal subunit protein uS11 (131 aa).

It belongs to the universal ribosomal protein uS11 family. In terms of assembly, part of the 30S ribosomal subunit. Interacts with proteins S7 and S18. Binds to IF-3. Interacts with VmlR. Interacts with BrxC.

Functionally, located on the platform of the 30S subunit, it bridges several disparate RNA helices of the 16S rRNA. Forms part of the Shine-Dalgarno cleft in the 70S ribosome. The sequence is that of Small ribosomal subunit protein uS11 from Bacillus subtilis (strain 168).